The following is a 216-amino-acid chain: Adenylate kinase (216 aa).

10 to 15 lines the ATP pocket; the sequence is GAGKGT. An NMP region spans residues 30 to 59; sequence STGDMLRAAVKAETPVGLKAKAVMEAGQLV. AMP is bound by residues Thr-31, Arg-36, 57–59, 85–88, and Gln-92; these read QLV and GYPR. The LID stretch occupies residues 126–164; it reads GRYTCATCGKGYHDKFEKPAVEGTCDKCGGHEFKRRPDD. Arg-127 is a binding site for ATP. Residues Cys-130, Cys-133, Cys-150, and Cys-153 each contribute to the Zn(2+) site. Positions 161 and 172 each coordinate AMP. Residue Ala-200 participates in ATP binding.

This sequence belongs to the adenylate kinase family. In terms of assembly, monomer.

Its subcellular location is the cytoplasm. It catalyses the reaction AMP + ATP = 2 ADP. It participates in purine metabolism; AMP biosynthesis via salvage pathway; AMP from ADP: step 1/1. Catalyzes the reversible transfer of the terminal phosphate group between ATP and AMP. Plays an important role in cellular energy homeostasis and in adenine nucleotide metabolism. The protein is Adenylate kinase of Novosphingobium aromaticivorans (strain ATCC 700278 / DSM 12444 / CCUG 56034 / CIP 105152 / NBRC 16084 / F199).